Consider the following 211-residue polypeptide: Dual specificity protein phosphatase 26 (211 aa).

The Tyrosine-protein phosphatase domain maps to 60-207 (NHADEVWPGL…LLALDRRLRQ (148 aa)). Catalysis depends on cysteine 152, which acts as the Phosphocysteine intermediate.

Belongs to the protein-tyrosine phosphatase family. Non-receptor class dual specificity subfamily. Interacts with HSF4.

The protein localises to the cytoplasm. The protein resides in the nucleus. It localises to the golgi apparatus. The catalysed reaction is O-phospho-L-tyrosyl-[protein] + H2O = L-tyrosyl-[protein] + phosphate. It catalyses the reaction O-phospho-L-seryl-[protein] + H2O = L-seryl-[protein] + phosphate. The enzyme catalyses O-phospho-L-threonyl-[protein] + H2O = L-threonyl-[protein] + phosphate. Its function is as follows. Inactivates MAPK1 and MAPK3 which leads to dephosphorylation of heat shock factor protein 4 and a reduction in its DNA-binding activity. This Pongo abelii (Sumatran orangutan) protein is Dual specificity protein phosphatase 26 (DUSP26).